The following is a 339-amino-acid chain: Biotin synthase (339 aa).

The Radical SAM core domain maps to 55–282 (NAVQLSTLLS…KAVVRLSAGR (228 aa)). Cys70, Cys74, and Cys77 together coordinate [4Fe-4S] cluster. [2Fe-2S] cluster is bound by residues Cys114, Cys145, Cys205, and Arg277.

This sequence belongs to the radical SAM superfamily. Biotin synthase family. As to quaternary structure, homodimer. Requires [4Fe-4S] cluster as cofactor. [2Fe-2S] cluster is required as a cofactor.

The enzyme catalyses (4R,5S)-dethiobiotin + (sulfur carrier)-SH + 2 reduced [2Fe-2S]-[ferredoxin] + 2 S-adenosyl-L-methionine = (sulfur carrier)-H + biotin + 2 5'-deoxyadenosine + 2 L-methionine + 2 oxidized [2Fe-2S]-[ferredoxin]. It functions in the pathway cofactor biosynthesis; biotin biosynthesis; biotin from 7,8-diaminononanoate: step 2/2. Functionally, catalyzes the conversion of dethiobiotin (DTB) to biotin by the insertion of a sulfur atom into dethiobiotin via a radical-based mechanism. This is Biotin synthase from Burkholderia ambifaria (strain MC40-6).